The chain runs to 117 residues: Large ribosomal subunit protein bL20 (117 aa).

This sequence belongs to the bacterial ribosomal protein bL20 family.

Binds directly to 23S ribosomal RNA and is necessary for the in vitro assembly process of the 50S ribosomal subunit. It is not involved in the protein synthesizing functions of that subunit. This Leptospira interrogans serogroup Icterohaemorrhagiae serovar copenhageni (strain Fiocruz L1-130) protein is Large ribosomal subunit protein bL20.